Here is a 365-residue protein sequence, read N- to C-terminus: Phospho-N-acetylmuramoyl-pentapeptide-transferase (365 aa).

10 helical membrane passes run 22 to 42, 74 to 94, 95 to 115, 133 to 153, 168 to 188, 201 to 221, 240 to 260, 267 to 287, 292 to 312, and 342 to 362; these read YISV…LALG, TMGG…WGDL, TSIY…IGFF, YKFA…FYLL, SLYI…IING, GLAI…AYIE, LAEV…FLWF, VFMG…IAVM, LIFF…MLQV, and KVVI…LAAI.

This sequence belongs to the glycosyltransferase 4 family. MraY subfamily. Mg(2+) is required as a cofactor.

The protein localises to the cell inner membrane. The catalysed reaction is UDP-N-acetyl-alpha-D-muramoyl-L-alanyl-gamma-D-glutamyl-meso-2,6-diaminopimeloyl-D-alanyl-D-alanine + di-trans,octa-cis-undecaprenyl phosphate = di-trans,octa-cis-undecaprenyl diphospho-N-acetyl-alpha-D-muramoyl-L-alanyl-D-glutamyl-meso-2,6-diaminopimeloyl-D-alanyl-D-alanine + UMP. The protein operates within cell wall biogenesis; peptidoglycan biosynthesis. In terms of biological role, catalyzes the initial step of the lipid cycle reactions in the biosynthesis of the cell wall peptidoglycan: transfers peptidoglycan precursor phospho-MurNAc-pentapeptide from UDP-MurNAc-pentapeptide onto the lipid carrier undecaprenyl phosphate, yielding undecaprenyl-pyrophosphoryl-MurNAc-pentapeptide, known as lipid I. The chain is Phospho-N-acetylmuramoyl-pentapeptide-transferase from Francisella tularensis subsp. tularensis (strain WY96-3418).